Reading from the N-terminus, the 160-residue chain is 2-C-methyl-D-erythritol 2,4-cyclodiphosphate synthase (160 aa).

A divalent metal cation-binding residues include aspartate 10 and histidine 12. 4-CDP-2-C-methyl-D-erythritol 2-phosphate-binding positions include 10 to 12 (DVH) and 36 to 37 (HS). Histidine 44 is a binding site for a divalent metal cation. Residues 58–60 (DIG), 63–67 (FPDTD), 102–108 (AQAPKML), 134–137 (TTTE), phenylalanine 141, and arginine 144 each bind 4-CDP-2-C-methyl-D-erythritol 2-phosphate.

The protein belongs to the IspF family. In terms of assembly, homotrimer. The cofactor is a divalent metal cation.

It carries out the reaction 4-CDP-2-C-methyl-D-erythritol 2-phosphate = 2-C-methyl-D-erythritol 2,4-cyclic diphosphate + CMP. It participates in isoprenoid biosynthesis; isopentenyl diphosphate biosynthesis via DXP pathway; isopentenyl diphosphate from 1-deoxy-D-xylulose 5-phosphate: step 4/6. In terms of biological role, involved in the biosynthesis of isopentenyl diphosphate (IPP) and dimethylallyl diphosphate (DMAPP), two major building blocks of isoprenoid compounds. Catalyzes the conversion of 4-diphosphocytidyl-2-C-methyl-D-erythritol 2-phosphate (CDP-ME2P) to 2-C-methyl-D-erythritol 2,4-cyclodiphosphate (ME-CPP) with a corresponding release of cytidine 5-monophosphate (CMP). This Shewanella amazonensis (strain ATCC BAA-1098 / SB2B) protein is 2-C-methyl-D-erythritol 2,4-cyclodiphosphate synthase.